The chain runs to 55 residues: Conotoxin Cal6.40 (55 aa).

Residues 1 to 21 form the signal peptide; it reads MSGSGVLLLTLLLLVPLSALA. Cystine bridges form between Cys24/Cys36, Cys29/Cys41, and Cys35/Cys50.

Expressed by the venom duct.

It is found in the secreted. Its function is as follows. Probable neurotoxin. This Californiconus californicus (California cone) protein is Conotoxin Cal6.40.